A 526-amino-acid polypeptide reads, in one-letter code: Glucomannan 4-beta-mannosyltransferase 1 (526 aa).

A helical transmembrane segment spans residues 31-51 (VIIPLLKLAVIVCSVMSIMLF). Residue Asp130 is part of the active site. Substrate contacts are provided by Asp189 and Asp191. Asp283 is an active-site residue. 4 helical membrane-spanning segments follow: residues 362-382 (IVAH…CVIV), 399-419 (ITIL…LWIL), 477-497 (PLEI…LLFG), and 501-521 (FFVY…GLVG).

This sequence belongs to the glycosyltransferase 2 family. Plant cellulose synthase-like A subfamily.

The protein localises to the golgi apparatus membrane. The enzyme catalyses GDP-mannose + (glucomannan)n = GDP + (glucomannan)n+1.. Its function is as follows. Possesses 4-beta-mannosyltransferase activity on mannan using GDP-mannose. The beta-1,4-mannan product is the backbone for galactomannan synthesis by galactomannan galactosyltransferase. The galactomannan is a hemicellulosic storage polysaccharide accumulated in the form of secondary wall thickenings in the seed endosperm. This is Glucomannan 4-beta-mannosyltransferase 1 from Cyamopsis tetragonoloba (Guar).